The primary structure comprises 161 residues: Cell wall protein YLR042C (161 aa).

Positions 1 to 24 are cleaved as a signal peptide; it reads MKISQFGSLAFAPIVLLQLFIVQA. Asn-77, Asn-104, and Asn-120 each carry an N-linked (GlcNAc...) asparagine glycan. Positions 111-139 are disordered; it reads FTPLPSSSRNETKSSQTTNTISSSTSTGG. The span at 123–137 shows a compositional bias: low complexity; sequence KSSQTTNTISSSTST. Gly-139 is lipidated: GPI-anchor amidated glycine. Residues 140-161 constitute a propeptide, removed in mature form; it reads VGSVKPCLYFVLMLETIAYLFS.

Post-translationally, the GPI-anchor is attached to the protein in the endoplasmic reticulum and serves to target the protein to the cell surface. There, the glucosamine-inositol phospholipid moiety is cleaved off and the GPI-modified mannoprotein is covalently attached via its lipidless GPI glycan remnant to the 1,6-beta-glucan of the outer cell wall layer.

The protein localises to the secreted. Its subcellular location is the cell wall. It localises to the membrane. This is Cell wall protein YLR042C from Saccharomyces cerevisiae (strain ATCC 204508 / S288c) (Baker's yeast).